The primary structure comprises 198 residues: Holliday junction resolvase RecU (198 aa).

Residues 1-21 (MVNYPHKLSSQKRQPSLSQPK) form a disordered region. Positions 11–21 (QKRQPSLSQPK) are enriched in polar residues. 4 residues coordinate Mg(2+): Thr81, Asp83, Glu96, and Gln115.

Belongs to the RecU family. Mg(2+) serves as cofactor.

The protein localises to the cytoplasm. The enzyme catalyses Endonucleolytic cleavage at a junction such as a reciprocal single-stranded crossover between two homologous DNA duplexes (Holliday junction).. In terms of biological role, endonuclease that resolves Holliday junction intermediates in genetic recombination. Cleaves mobile four-strand junctions by introducing symmetrical nicks in paired strands. Promotes annealing of linear ssDNA with homologous dsDNA. Required for DNA repair, homologous recombination and chromosome segregation. The chain is Holliday junction resolvase RecU from Streptococcus pneumoniae (strain Taiwan19F-14).